Here is a 341-residue protein sequence, read N- to C-terminus: UDP-3-O-acylglucosamine N-acyltransferase (341 aa).

H242 functions as the Proton acceptor in the catalytic mechanism.

Belongs to the transferase hexapeptide repeat family. LpxD subfamily. In terms of assembly, homotrimer.

The catalysed reaction is a UDP-3-O-[(3R)-3-hydroxyacyl]-alpha-D-glucosamine + a (3R)-hydroxyacyl-[ACP] = a UDP-2-N,3-O-bis[(3R)-3-hydroxyacyl]-alpha-D-glucosamine + holo-[ACP] + H(+). The protein operates within bacterial outer membrane biogenesis; LPS lipid A biosynthesis. Its function is as follows. Catalyzes the N-acylation of UDP-3-O-acylglucosamine using 3-hydroxyacyl-ACP as the acyl donor. Is involved in the biosynthesis of lipid A, a phosphorylated glycolipid that anchors the lipopolysaccharide to the outer membrane of the cell. The chain is UDP-3-O-acylglucosamine N-acyltransferase from Haemophilus influenzae (strain ATCC 51907 / DSM 11121 / KW20 / Rd).